The primary structure comprises 341 residues: S-adenosylmethionine:tRNA ribosyltransferase-isomerase (341 aa).

Belongs to the QueA family. As to quaternary structure, monomer.

The protein localises to the cytoplasm. It carries out the reaction 7-aminomethyl-7-carbaguanosine(34) in tRNA + S-adenosyl-L-methionine = epoxyqueuosine(34) in tRNA + adenine + L-methionine + 2 H(+). Its pathway is tRNA modification; tRNA-queuosine biosynthesis. In terms of biological role, transfers and isomerizes the ribose moiety from AdoMet to the 7-aminomethyl group of 7-deazaguanine (preQ1-tRNA) to give epoxyqueuosine (oQ-tRNA). The protein is S-adenosylmethionine:tRNA ribosyltransferase-isomerase of Clostridium botulinum (strain ATCC 19397 / Type A).